We begin with the raw amino-acid sequence, 296 residues long: Elongation factor Ts (296 aa).

Residues 79 to 82 (TDFV) form an involved in Mg(2+) ion dislocation from EF-Tu region.

Belongs to the EF-Ts family.

The protein resides in the cytoplasm. In terms of biological role, associates with the EF-Tu.GDP complex and induces the exchange of GDP to GTP. It remains bound to the aminoacyl-tRNA.EF-Tu.GTP complex up to the GTP hydrolysis stage on the ribosome. This chain is Elongation factor Ts, found in Paracoccus denitrificans (strain Pd 1222).